We begin with the raw amino-acid sequence, 881 residues long: Envelope glycoprotein gp160 (881 aa).

The signal sequence occupies residues 1-19 (MGCLGNQLLIAILLLSVYG). Over 20-696 (IYCTQYVTVF…ASWIKYIQYG (677 aa)) the chain is Extracellular. A glycan (N-linked (GlcNAc...) asparagine; by host) is linked at asparagine 37. Cysteines 44 and 57 form a disulfide. Asparagine 70, asparagine 114, asparagine 148, asparagine 158, asparagine 186, asparagine 200, asparagine 204, asparagine 214, asparagine 246, asparagine 249, asparagine 280, asparagine 286, asparagine 297, asparagine 308, asparagine 318, asparagine 373, and asparagine 379 each carry an N-linked (GlcNAc...) asparagine; by host glycan. 5 disulfides stabilise this stretch: cysteine 101-cysteine 222, cysteine 108-cysteine 213, cysteine 113-cysteine 170, cysteine 235-cysteine 265, and cysteine 245-cysteine 257. The V1 stretch occupies residues 113–169 (CNKSETDRWGLTKSSTTITTAAPTSAPVSEKIDMVNETSSCIAQNNCTGLEQEQMIS). The V2 stretch occupies residues 170-213 (CKFTMTGLKRDKTKEYNETWYSTDLVCEQGNSTDNESRCYMNHC). The tract at residues 313 to 345 (CRRPGNKTVLPVTIMSGLVFHSQPINDRPKQAW) is V3. A disulfide bridge links cysteine 313 with cysteine 346. 2 cysteine pairs are disulfide-bonded: cysteine 397–cysteine 461 and cysteine 404–cysteine 434. The interval 404–434 (CKMNWFLNWVEDRDVTTQRPKERHRRNYVPC) is V4. N-linked (GlcNAc...) asparagine; by host glycosylation is found at asparagine 462 and asparagine 478. Positions 477–484 (GNQTSITM) are V5. The tract at residues 528 to 548 (GVFVLGFLGFLATAGSAMGAA) is fusion peptide. Residues 591–607 (LQTRVTAIEKYLKDQAQ) form an immunosuppression region. 3 N-linked (GlcNAc...) asparagine; by host glycosylation sites follow: asparagine 627, asparagine 636, and asparagine 652. Residues 636-668 (NDTWQEWERKVDFLEENITALLEEAQIQQEKNM) adopt a coiled-coil conformation. The MPER; binding to GalCer stretch occupies residues 673–694 (KLNSWDVFGNWFDLASWIKYIQ). A helical membrane pass occupies residues 697–717 (IYVVVGVILLRIVIYIVQMLA). The Cytoplasmic portion of the chain corresponds to 718–881 (KLRQGYRPVF…IRQGLELTLL (164 aa)). A YXXV motif; contains endocytosis signal motif is present at residues 723–726 (YRPV). A disordered region spans residues 737–761 (THTQQDPALPTREGKEGDGGEGGGN). The S-palmitoyl cysteine; by host moiety is linked to residue cysteine 789. Positions 880-881 (LL) match the Di-leucine internalization motif motif.

In terms of assembly, the mature envelope protein (Env) consists of a homotrimer of non-covalently associated gp120-gp41 heterodimers. The resulting complex protrudes from the virus surface as a spike. Interacts with host CD4 and CCR5. Gp120 also interacts with the C-type lectins CD209/DC-SIGN and CLEC4M/DC-SIGNR (collectively referred to as DC-SIGN(R)). The mature envelope protein (Env) consists of a homotrimer of non-covalently associated gp120-gp41 heterodimers. The resulting complex protrudes from the virus surface as a spike. In terms of processing, specific enzymatic cleavages in vivo yield mature proteins. Envelope glycoproteins are synthesized as an inactive precursor that is heavily N-glycosylated and processed likely by host cell furin in the Golgi to yield the mature SU and TM proteins. The cleavage site between SU and TM requires the minimal sequence [KR]-X-[KR]-R. Palmitoylation of the transmembrane protein and of Env polyprotein (prior to its proteolytic cleavage) is essential for their association with host cell membrane lipid rafts. Palmitoylation is therefore required for envelope trafficking to classical lipid rafts, but not for viral replication.

It is found in the virion membrane. It localises to the host cell membrane. The protein localises to the host endosome membrane. Functionally, the surface protein gp120 (SU) attaches the virus to the host lymphoid cell by binding to the primary receptor CD4. This interaction induces a structural rearrangement creating a high affinity binding site for a chemokine coreceptor like CCR5. This peculiar 2 stage receptor-interaction strategy allows gp120 to maintain the highly conserved coreceptor-binding site in a cryptic conformation, protected from neutralizing antibodies. These changes are transmitted to the transmembrane protein gp41 and are thought to activate its fusogenic potential by unmasking its fusion peptide. In terms of biological role, surface protein gp120 (SU) may target the virus to gut-associated lymphoid tissue (GALT) by binding host ITGA4/ITGB7 (alpha-4/beta-7 integrins), a complex that mediates T-cell migration to the GALT. Interaction between gp120 and ITGA4/ITGB7 would allow the virus to enter GALT early in the infection, infecting and killing most of GALT's resting CD4+ T-cells. This T-cell depletion is believed to be the major insult to the host immune system leading to AIDS. Its function is as follows. The surface protein gp120 is a ligand for CD209/DC-SIGN and CLEC4M/DC-SIGNR, which are respectively found on dendritic cells (DCs), and on endothelial cells of liver sinusoids and lymph node sinuses. These interactions allow capture of viral particles at mucosal surfaces by these cells and subsequent transmission to permissive cells. DCs are professional antigen presenting cells, critical for host immunity by inducing specific immune responses against a broad variety of pathogens. They act as sentinels in various tissues where they take up antigen, process it, and present it to T-cells following migration to lymphoid organs. SIV subverts the migration properties of dendritic cells to gain access to CD4+ T-cells in lymph nodes. Virus transmission to permissive T-cells occurs either in trans (without DCs infection, through viral capture and transmission), or in cis (following DCs productive infection, through the usual CD4-gp120 interaction), thereby inducing a robust infection. In trans infection, bound virions remain infectious over days and it is proposed that they are not degraded, but protected in non-lysosomal acidic organelles within the DCs close to the cell membrane thus contributing to the viral infectious potential during DCs' migration from the periphery to the lymphoid tissues. On arrival at lymphoid tissues, intact virions recycle back to DCs' cell surface allowing virus transmission to CD4+ T-cells. Virion capture also seems to lead to MHC-II-restricted viral antigen presentation, and probably to the activation of SIV-specific CD4+ cells. The transmembrane protein gp41 (TM) acts as a class I viral fusion protein. Under the current model, the protein has at least 3 conformational states: pre-fusion native state, pre-hairpin intermediate state, and post-fusion hairpin state. During fusion of viral and target intracellular membranes, the coiled coil regions (heptad repeats) assume a trimer-of-hairpins structure, positioning the fusion peptide in close proximity to the C-terminal region of the ectodomain. The formation of this structure appears to drive apposition and subsequent fusion of viral and target cell membranes. Complete fusion occurs in host cell endosomes. The virus undergoes clathrin-dependent internalization long before endosomal fusion, thus minimizing the surface exposure of conserved viral epitopes during fusion and reducing the efficacy of inhibitors targeting these epitopes. Membranes fusion leads to delivery of the nucleocapsid into the cytoplasm. Functionally, the envelope glycoprotein gp160 precursor down-modulates cell surface CD4 antigen by interacting with it in the endoplasmic reticulum and blocking its transport to the cell surface. In terms of biological role, the gp120-gp41 heterodimer allows rapid transcytosis of the virus through CD4 negative cells such as simple epithelial monolayers of the intestinal, rectal and endocervical epithelial barriers. Both gp120 and gp41 specifically recognize glycosphingolipids galactosyl-ceramide (GalCer) or 3' sulfo-galactosyl-ceramide (GalS) present in the lipid rafts structures of epithelial cells. Binding to these alternative receptors allows the rapid transcytosis of the virus through the epithelial cells. This transcytotic vesicle-mediated transport of virions from the apical side to the basolateral side of the epithelial cells does not involve infection of the cells themselves. The sequence is that of Envelope glycoprotein gp160 (env) from Cercopithecidae (Old World monkeys).